The following is a 402-amino-acid chain: Aminotransferase-like protein FGM3 (402 aa).

Residues 137-138 (TI), aspartate 218, and 282-283 (FG) contribute to the pyridoxal 5'-phosphate site.

It belongs to the class-V pyridoxal-phosphate-dependent aminotransferase family. Csd subfamily.

Functionally, aminotransferase-like protein; part of the Fg3_54/C64 gene cluster that mediates the biosynthesis of the octapeptide fusaoctaxin A, a virulence factor that is required for cell-to-cell invasiveness of plant host. The 2 nonribosomal peptide synthetases NRPS9 and NRPS5 form an assembly line which likely utilizes GABA as a starter unit (loaded on the unique module M1 of NRPS9) and sequentially incorporates seven extender units composed of the residues L-Ala, L-allo-Ile, L-Ser, L-Val, L-Ser, L-Leu and L-Leu, respectively. During the process, each of the residues that are tethered on modules M3-M7 of NRPS5 containing an E domain can undergo an epimerization reaction to produce a D-configuration before the transpeptidation reaction occurs. The elongation of the peptidyl chain might be terminated by module M8-mediated L-Leu incorporation, followed by R domain-catalyzed 4 electron reduction to release the resulting octapeptide from the assembly line as an alcohol. Fusaoctaxin A is cleaved by the cluster specific ABC transporter FGM5 to the pentapeptide fusapentaxin A and the tripeptide fusatrixin A. The other enzymes from the cluster, FGM1, FGM2, FGM3 and FGM9 seem not to be involved in the biosynthesis of fusaoctaxin A and their functions have still to be determined. In Gibberella zeae (strain ATCC MYA-4620 / CBS 123657 / FGSC 9075 / NRRL 31084 / PH-1) (Wheat head blight fungus), this protein is Aminotransferase-like protein FGM3.